The primary structure comprises 397 residues: Succinate--CoA ligase [ADP-forming] subunit beta (397 aa).

The ATP-grasp domain maps to 9–254 (KALLKGYGAP…ETEEDAKEIE (246 aa)). ATP is bound by residues Lys-46, 53 to 55 (GRG), Glu-109, Ala-112, and Glu-117. Residues Asn-209 and Asp-223 each contribute to the Mg(2+) site. Substrate contacts are provided by residues Asn-274 and 331-333 (GIM).

It belongs to the succinate/malate CoA ligase beta subunit family. As to quaternary structure, heterotetramer of two alpha and two beta subunits. Requires Mg(2+) as cofactor.

The catalysed reaction is succinate + ATP + CoA = succinyl-CoA + ADP + phosphate. It catalyses the reaction GTP + succinate + CoA = succinyl-CoA + GDP + phosphate. It participates in carbohydrate metabolism; tricarboxylic acid cycle; succinate from succinyl-CoA (ligase route): step 1/1. In terms of biological role, succinyl-CoA synthetase functions in the citric acid cycle (TCA), coupling the hydrolysis of succinyl-CoA to the synthesis of either ATP or GTP and thus represents the only step of substrate-level phosphorylation in the TCA. The beta subunit provides nucleotide specificity of the enzyme and binds the substrate succinate, while the binding sites for coenzyme A and phosphate are found in the alpha subunit. The polypeptide is Succinate--CoA ligase [ADP-forming] subunit beta (Rhizobium etli (strain CIAT 652)).